A 259-amino-acid chain; its full sequence is Thiazole synthase (259 aa).

The active-site Schiff-base intermediate with DXP is lysine 102. 1-deoxy-D-xylulose 5-phosphate-binding positions include glycine 163, 189–190 (AG), and 211–212 (NT).

Belongs to the ThiG family. Homotetramer. Forms heterodimers with either ThiH or ThiS.

It localises to the cytoplasm. The enzyme catalyses [ThiS sulfur-carrier protein]-C-terminal-Gly-aminoethanethioate + 2-iminoacetate + 1-deoxy-D-xylulose 5-phosphate = [ThiS sulfur-carrier protein]-C-terminal Gly-Gly + 2-[(2R,5Z)-2-carboxy-4-methylthiazol-5(2H)-ylidene]ethyl phosphate + 2 H2O + H(+). The protein operates within cofactor biosynthesis; thiamine diphosphate biosynthesis. Its function is as follows. Catalyzes the rearrangement of 1-deoxy-D-xylulose 5-phosphate (DXP) to produce the thiazole phosphate moiety of thiamine. Sulfur is provided by the thiocarboxylate moiety of the carrier protein ThiS. In vitro, sulfur can be provided by H(2)S. The sequence is that of Thiazole synthase from Novosphingobium aromaticivorans (strain ATCC 700278 / DSM 12444 / CCUG 56034 / CIP 105152 / NBRC 16084 / F199).